Here is a 35-residue protein sequence, read N- to C-terminus: Photosystem II reaction center protein T (35 aa).

A helical membrane pass occupies residues 3-23 (ALVYTFLLVGTLGIIFFAIFF).

This sequence belongs to the PsbT family. PSII is composed of 1 copy each of membrane proteins PsbA, PsbB, PsbC, PsbD, PsbE, PsbF, PsbH, PsbI, PsbJ, PsbK, PsbL, PsbM, PsbT, PsbY, PsbZ, Psb30/Ycf12, at least 3 peripheral proteins of the oxygen-evolving complex and a large number of cofactors. It forms dimeric complexes.

Its subcellular location is the plastid. It is found in the chloroplast thylakoid membrane. In terms of biological role, found at the monomer-monomer interface of the photosystem II (PS II) dimer, plays a role in assembly and dimerization of PSII. PSII is a light-driven water plastoquinone oxidoreductase, using light energy to abstract electrons from H(2)O, generating a proton gradient subsequently used for ATP formation. This chain is Photosystem II reaction center protein T, found in Chaetosphaeridium globosum (Charophycean green alga).